We begin with the raw amino-acid sequence, 442 residues long: D-serine dehydratase (442 aa).

The residue at position 118 (Lys-118) is an N6-(pyridoxal phosphate)lysine.

The protein belongs to the serine/threonine dehydratase family. DsdA subfamily. As to quaternary structure, monomer. The cofactor is pyridoxal 5'-phosphate.

The enzyme catalyses D-serine = pyruvate + NH4(+). The protein is D-serine dehydratase of Citrobacter koseri (strain ATCC BAA-895 / CDC 4225-83 / SGSC4696).